Here is a 375-residue protein sequence, read N- to C-terminus: Protein RIC-3 (375 aa).

The N-terminal stretch at 1-29 is a signal peptide; sequence MALSAVQKVVLFSCLVLCVSLLLPRAYIA. The Lumenal portion of the chain corresponds to 30–90; it reads RGKPAAQEGN…GGGGGTRPSL (61 aa). Residues 38–47 show a composition bias toward polar residues; the sequence is GNTGLFQSSG. The disordered stretch occupies residues 38 to 63; sequence GNTGLFQSSGHHPKPTDGRPGGAHFP. Residues 91 to 111 form a helical membrane-spanning segment; it reads VGQIIPIYGFGILLYILYILF. Residues 112–375 lie on the Cytoplasmic side of the membrane; sequence KLSSKGKSTK…RKRNTKGIEY (264 aa). The stretch at 135 to 165 forms a coiled coil; it reads KRKITDYELSQLQDKLKETEEAMEKIISRLG. The interval 251-375 is disordered; the sequence is SAEQVAEQMG…RKRNTKGIEY (125 aa). Positions 286–296 are enriched in polar residues; it reads GDQQAQGTISA. Acidic residues predominate over residues 305–319; that stretch reads EDIEEDEDEDEDPEV. The span at 365–375 shows a compositional bias: basic residues; that stretch reads LRKRNTKGIEY.

It belongs to the ric-3 family.

It localises to the endoplasmic reticulum membrane. Molecular chaperone which facilitates proper subunit assembly andsurface trafficking of alpha-7 (CHRNA7) and alpha-8 (CHRNA8) nicotinic acetylcholine receptors. May also promote functional expression of homomeric serotoninergic 5-HT3 receptors, and of heteromeric acetylcholine receptors. This chain is Protein RIC-3 (ric3), found in Xenopus tropicalis (Western clawed frog).